The primary structure comprises 446 residues: Calcium-binding and coiled-coil domain-containing protein 2 (446 aa).

The CLIR signature appears at 133–136 (ILVV). Residues 137–349 (TTQGEVEEIE…RENSRLLSYM (213 aa)) are a coiled coil. An LIR-like motif is present at residues 203-206 (DYWE). The interaction with LGALS8 stretch occupies residues 371-381 (NPGLVYGNPYS). An interaction with MYO6 region spans residues 395–446 (KKCPICKADDICDHILEQQQMQPLCLNCPICDKIFPATEKQIFEDHVFCHSL). A UBZ1-type zinc finger spans residues 419 to 444 (CLNCPICDKIFPATEKQIFEDHVFCH). Zn(2+)-binding residues include Cys-422, Cys-425, His-440, and His-444. The residue at position 445 (Ser-445) is a Phosphoserine.

The protein belongs to the CALCOCO family. Dimer. Part of a complex consisting of CALCOCO2, TAX1BP1 and MYO6. Interacts with MYO6. Interacts with GEMIN4. Interacts with ATG8 family members MAP1LC3A, MAP1LC3B, GABARAP, GABARAPL1 and GABARAPL2. Interacts with ATG8 family member MAP1LC3C. Interacts with LGALS8. Interacts with TOM1; the interaction is indirect and is mediated by MYO6, which acts as a bridge between TOM1 and CALCOCO2. Interacts with AZI2.

It is found in the cytoplasm. Its subcellular location is the perinuclear region. It localises to the cytoskeleton. The protein localises to the cytoplasmic vesicle. The protein resides in the autophagosome membrane. Its function is as follows. Xenophagy-specific receptor required for autophagy-mediated intracellular bacteria degradation. Acts as an effector protein of galectin-sensed membrane damage that restricts the proliferation of infecting pathogens upon entry into the cytosol by targeting LGALS8-associated bacteria for autophagy. Initially orchestrates bacteria targeting to autophagosomes and subsequently ensures pathogen degradation by regulating pathogen-containing autophagosome maturation. Bacteria targeting to autophagosomes relies on its interaction with MAP1LC3A, MAP1LC3B and/or GABARAPL2, whereas regulation of pathogen-containing autophagosome maturation requires the interaction with MAP3LC3C. May play a role in ruffle formation and actin cytoskeleton organization and seems to negatively regulate constitutive secretion. The polypeptide is Calcium-binding and coiled-coil domain-containing protein 2 (Pongo abelii (Sumatran orangutan)).